Here is a 257-residue protein sequence, read N- to C-terminus: Acetylglutamate kinase (257 aa).

Substrate-binding positions include 43-44, Arg65, and Asn157; that span reads GG. Residues 180–185 and 208–210 each bind ATP; these read DISSIL and IIT.

It belongs to the acetylglutamate kinase family. ArgB subfamily. As to quaternary structure, homodimer.

The protein resides in the cytoplasm. It carries out the reaction N-acetyl-L-glutamate + ATP = N-acetyl-L-glutamyl 5-phosphate + ADP. The protein operates within amino-acid biosynthesis; L-arginine biosynthesis; N(2)-acetyl-L-ornithine from L-glutamate: step 2/4. In terms of biological role, catalyzes the ATP-dependent phosphorylation of N-acetyl-L-glutamate. The polypeptide is Acetylglutamate kinase (Buchnera aphidicola subsp. Acyrthosiphon pisum (strain 5A)).